A 196-amino-acid polypeptide reads, in one-letter code: Nucleoid occlusion factor SlmA (196 aa).

The 62-residue stretch at 7–68 (SNRREEILQA…GLIEFIEEAL (62 aa)) folds into the HTH tetR-type domain. The segment at residues 31 to 50 (TTAKLAQQVGVSEAALYRHF) is a DNA-binding region (H-T-H motif). Positions 65-142 (EEALMSRINR…QLRQILRERK (78 aa)) form a coiled coil.

Belongs to the nucleoid occlusion factor SlmA family. As to quaternary structure, homodimer. Interacts with FtsZ.

It is found in the cytoplasm. Its subcellular location is the nucleoid. Required for nucleoid occlusion (NO) phenomenon, which prevents Z-ring formation and cell division over the nucleoid. Acts as a DNA-associated cell division inhibitor that binds simultaneously chromosomal DNA and FtsZ, and disrupts the assembly of FtsZ polymers. SlmA-DNA-binding sequences (SBS) are dispersed on non-Ter regions of the chromosome, preventing FtsZ polymerization at these regions. The polypeptide is Nucleoid occlusion factor SlmA (Vibrio vulnificus (strain CMCP6)).